The chain runs to 139 residues: Protein Turandot B (139 aa).

Residues 1-21 (MNFKTALICFALLLIGTLCSA) form the signal peptide.

It belongs to the Turandot family.

The protein resides in the secreted. Functionally, a humoral factor that may play a role in stress tolerance. In Drosophila sechellia (Fruit fly), this protein is Protein Turandot B.